The following is a 122-amino-acid chain: Small ribosomal subunit protein uS13 (122 aa).

The segment at 97–122 (PVRGQRTHTNARTRKGPAKAIAGKKK) is disordered.

Belongs to the universal ribosomal protein uS13 family. As to quaternary structure, part of the 30S ribosomal subunit. Forms a loose heterodimer with protein S19. Forms two bridges to the 50S subunit in the 70S ribosome.

Its function is as follows. Located at the top of the head of the 30S subunit, it contacts several helices of the 16S rRNA. In the 70S ribosome it contacts the 23S rRNA (bridge B1a) and protein L5 of the 50S subunit (bridge B1b), connecting the 2 subunits; these bridges are implicated in subunit movement. Contacts the tRNAs in the A and P-sites. This is Small ribosomal subunit protein uS13 from Bartonella henselae (strain ATCC 49882 / DSM 28221 / CCUG 30454 / Houston 1) (Rochalimaea henselae).